A 248-amino-acid polypeptide reads, in one-letter code: Ribosomal RNA small subunit methyltransferase J (248 aa).

Residues 98 to 99, 114 to 115, 150 to 151, and D168 contribute to the S-adenosyl-L-methionine site; these read RD, ER, and SS.

This sequence belongs to the methyltransferase superfamily. RsmJ family.

It localises to the cytoplasm. The enzyme catalyses guanosine(1516) in 16S rRNA + S-adenosyl-L-methionine = N(2)-methylguanosine(1516) in 16S rRNA + S-adenosyl-L-homocysteine + H(+). Its function is as follows. Specifically methylates the guanosine in position 1516 of 16S rRNA. This chain is Ribosomal RNA small subunit methyltransferase J, found in Shewanella amazonensis (strain ATCC BAA-1098 / SB2B).